The chain runs to 238 residues: Ribose-5-phosphate isomerase A (238 aa).

Residues 30–33, 87–90, and 100–103 each bind substrate; these read SGST, DGAD, and KGGG. Glu109 acts as the Proton acceptor in catalysis. Lys127 contacts substrate.

Belongs to the ribose 5-phosphate isomerase family. As to quaternary structure, homodimer.

The catalysed reaction is aldehydo-D-ribose 5-phosphate = D-ribulose 5-phosphate. It participates in carbohydrate degradation; pentose phosphate pathway; D-ribose 5-phosphate from D-ribulose 5-phosphate (non-oxidative stage): step 1/1. Functionally, catalyzes the reversible conversion of ribose-5-phosphate to ribulose 5-phosphate. The protein is Ribose-5-phosphate isomerase A of Prochlorococcus marinus (strain MIT 9303).